The chain runs to 918 residues: Cell cycle and apoptosis regulator protein 2 (918 aa).

The segment at 1 to 35 (MSQFKRQRINPLPGGRNFSGTASTSLLGPPPGLLT) is disordered. A Phosphothreonine modification is found at Thr35. Lys112 carries the post-translational modification N6-acetyllysine; by KAT8. The residue at position 123 (Lys123) is an N6-methyllysine. The residue at position 124 (Ser124) is a Phosphoserine. 3 disordered regions span residues 179-219 (NRFP…KPRH), 446-510 (KAAE…PAVI), and 568-637 (VSPP…ASED). Arg180 carries the post-translational modification Omega-N-methylarginine. Lys215 bears the N6-acetyllysine; by KAT8 mark. Composition is skewed to low complexity over residues 447–468 (AAEA…EQAP) and 482–492 (AETPEATTQQE). Residue Thr454 is modified to Phosphothreonine; by ATM, ATR and CK2. Residue Thr484 is modified to Phosphothreonine. Phosphoserine is present on Ser569. The span at 572 to 597 (EPEKEEAAKEEEAIKEEVVKEPKDEA) shows a compositional bias: basic and acidic residues. Lys586 participates in a covalent cross-link: Glycyl lysine isopeptide (Lys-Gly) (interchain with G-Cter in SUMO2 and SUMO3); alternate. Residue Lys586 forms a Glycyl lysine isopeptide (Lys-Gly) (interchain with G-Cter in SUMO2); alternate linkage. The interaction with MCC stretch occupies residues 605–665 (ESEAPLKEDG…EEFAGAKLED (61 aa)). Ser622, Ser670, Ser673, Ser676, Ser682, and Ser803 each carry phosphoserine. The interval 699-918 (DCLLAFVFFD…VEKEEPAPSN (220 aa)) is interaction with NR1D1. A coiled-coil region spans residues 824–904 (LENRIHTLEL…QLEIQRVVEK (81 aa)). Thr892 carries the phosphothreonine modification.

As to quaternary structure, component of the DBIRD complex. Interacts with ZNF326/ZIRD; the interaction is direct. Interacts (via N-terminus) with SIRT1, which inhibits the deacetylation of substrates. Interacts (via N-terminus) with SUV39H1; this interaction abolishes the interaction with SIRT1. Component of a nuclear receptor-mediated transcription complex composed of at least ZNF335, CCAR2 and EMSY; the complex stimulates the transcription of nuclear receptor target genes such as SOX9 and HOXA1. Within the complex interacts with EMSY and interacts with ZNF335 (via C-terminus). Components of this complex may associate with components of a histone methylation complex to form a complex at least composed of ZNF335, HCFC1, CCAR2, EMSY, MKI67, RBBP5, ASH2L and WDR5. Within this complex, interacts with ASH2L. Interacts with NR1D1. Interacts (via N-terminus) with ESR1 and ESR2. Interacts (via N-terminus) with HDAC3 (via C-terminus). Interacts with HDAC1 and MED2F. Interacts with MCC. Interacts (via N-terminus) with NR1H2 and NR1H3 in a ligand-independent manner. Interacts with CSNK2A1. Interacts (via N-terminus) with p53/TP53. Interacts (via N-terminus) with BRCA1 (via the BRCT domains). Interacts (via N-terminus) with CHEK2 (via protein kinase domain). Interacts with PSEM3. Interacts (via N-terminus) with PSIA3 and SENP1. The sumoylated form shows a preferential interaction with SIRT1 as compared to its unmodified form. Interacts with CECR2; may form part of the CERF-1 and/or CEF-5 ISWI chromatin remodeling complexes in embryonic stem cells. ATM/ATR-mediated phosphorylation at Thr-454 upon DNA damage promotes binding to SIRT1. Phosphorylation at Thr-454 promotes its sumoylation by switching the binding partner of CCAR2 from SENP1 to PIAS3. In terms of processing, acetylation at Lys-112 and Lys-215 by KAT8 prevents inhibitory binding to SIRT1 and increases its deacetylase activity. Post-translationally, genotoxic stress induces its sumoylation and sumoylation promotes the SIRT1-CCAR2 interaction which in turn inhibits SIRT1-mediated deacetylation of p53/TP53. Sumoylation leads to transcriptional activation of p53/TP53 by sequestering SIRT1 from p53/TP53. Desumoylated by SENP1.

Its subcellular location is the nucleus. The protein resides in the cytoplasm. It is found in the cytoskeleton. The protein localises to the spindle. Functionally, core component of the DBIRD complex, a multiprotein complex that acts at the interface between core mRNP particles and RNA polymerase II (RNAPII) and integrates transcript elongation with the regulation of alternative splicing: the DBIRD complex affects local transcript elongation rates and alternative splicing of a large set of exons embedded in (A + T)-rich DNA regions. Inhibits SIRT1 deacetylase activity leading to increasing levels of p53/TP53 acetylation and p53-mediated apoptosis. Inhibits SUV39H1 methyltransferase activity. Mediates ligand-dependent transcriptional activation by nuclear hormone receptors. Plays a critical role in maintaining genomic stability and cellular integrity following UV-induced genotoxic stress. Regulates the circadian expression of the core clock components NR1D1 and BMAL1. Enhances the transcriptional repressor activity of NR1D1 through stabilization of NR1D1 protein levels by preventing its ubiquitination and subsequent degradation. Represses the ligand-dependent transcriptional activation function of ESR2. Acts as a regulator of PCK1 expression and gluconeogenesis by a mechanism that involves, at least in part, both NR1D1 and SIRT1. Negatively regulates the deacetylase activity of HDAC3 and can alter its subcellular localization. Positively regulates the beta-catenin pathway (canonical Wnt signaling pathway) and is required for MCC-mediated repression of the beta-catenin pathway. Represses ligand-dependent transcriptional activation function of NR1H2 and NR1H3 and inhibits the interaction of SIRT1 with NR1H3. Plays an important role in tumor suppression through p53/TP53 regulation; stabilizes p53/TP53 by affecting its interaction with ubiquitin ligase MDM2. Represses the transcriptional activator activity of BRCA1. Inhibits SIRT1 in a CHEK2 and PSEM3-dependent manner and inhibits the activity of CHEK2 in vitro. This Pongo abelii (Sumatran orangutan) protein is Cell cycle and apoptosis regulator protein 2 (CCAR2).